The sequence spans 447 residues: Cobyrinate a,c-diamide synthase (447 aa).

One can recognise a GATase cobBQ-type domain in the interval 247–435 (RIGVAIDEAF…IHIHAASCPQ (189 aa)). Cys-329 acts as the Nucleophile in catalysis.

The protein belongs to the CobB/CbiA family. It depends on Mg(2+) as a cofactor.

The catalysed reaction is cob(II)yrinate + 2 L-glutamine + 2 ATP + 2 H2O = cob(II)yrinate a,c diamide + 2 L-glutamate + 2 ADP + 2 phosphate + 2 H(+). It carries out the reaction Ni-sirohydrochlorin + 2 L-glutamine + 2 ATP + 2 H2O = Ni-sirohydrochlorin a,c-diamide + 2 L-glutamate + 2 ADP + 2 phosphate + 2 H(+). It participates in cofactor biosynthesis; adenosylcobalamin biosynthesis; cob(II)yrinate a,c-diamide from sirohydrochlorin (anaerobic route): step 10/10. Its function is as follows. Catalyzes the ATP-dependent amidation of the two carboxylate groups at positions a and c of cobyrinate, using either L-glutamine or ammonia as the nitrogen source. Involved in the biosynthesis of the unique nickel-containing tetrapyrrole coenzyme F430, the prosthetic group of methyl-coenzyme M reductase (MCR), which plays a key role in methanogenesis and anaerobic methane oxidation. Catalyzes the ATP-dependent amidation of the two carboxylate groups at positions a and c of Ni-sirohydrochlorin, using L-glutamine or ammonia as the nitrogen source. This Methanothermobacter thermautotrophicus (strain ATCC 29096 / DSM 1053 / JCM 10044 / NBRC 100330 / Delta H) (Methanobacterium thermoautotrophicum) protein is Cobyrinate a,c-diamide synthase.